We begin with the raw amino-acid sequence, 251 residues long: BRI3-binding protein (251 aa).

The next 4 helical transmembrane spans lie at 13–33 (AGLLLLLLLLLLLGLLAPGAQ), 125–145 (ALLLVGVVLLAYWFLSLTLGF), 146–166 (TFSVLHVVFGRFFWIVRVVLF), and 185–205 (VLPLCFVVAVYFMTGPMGFYW). The stretch at 217 to 247 (NPSVEEKLEHLEKQVRLLNIRLNRVLESLDR) forms a coiled coil. K229 carries the post-translational modification N6-acetyllysine. S248 is subject to Phosphoserine.

As to quaternary structure, interacts with LETMD1. Interacts with BRI3 (isoforms 1 and 2); the interaction with isoform 2 is weaker than with isoform 1. Interacts with BRI3; the interaction is weak. Interacts with TMEM238L. As to expression, most abundantly expressed in brain, liver and kidney. Overexpressed in leukemia and lymphoma cell lines, as well as in various carcinomas.

The protein resides in the mitochondrion outer membrane. Functionally, involved in tumorigenesis and may function by stabilizing p53/TP53. The protein is BRI3-binding protein of Homo sapiens (Human).